A 153-amino-acid chain; its full sequence is 6,7-dimethyl-8-ribityllumazine synthase (153 aa).

Residues F22, 56–58 (AFE), and 80–82 (TVI) each bind 5-amino-6-(D-ribitylamino)uracil. 85-86 (ST) serves as a coordination point for (2S)-2-hydroxy-3-oxobutyl phosphate. H88 serves as the catalytic Proton donor. F113 lines the 5-amino-6-(D-ribitylamino)uracil pocket. R127 contacts (2S)-2-hydroxy-3-oxobutyl phosphate.

The protein belongs to the DMRL synthase family. As to quaternary structure, forms an icosahedral capsid composed of 60 subunits, arranged as a dodecamer of pentamers.

The enzyme catalyses (2S)-2-hydroxy-3-oxobutyl phosphate + 5-amino-6-(D-ribitylamino)uracil = 6,7-dimethyl-8-(1-D-ribityl)lumazine + phosphate + 2 H2O + H(+). The protein operates within cofactor biosynthesis; riboflavin biosynthesis; riboflavin from 2-hydroxy-3-oxobutyl phosphate and 5-amino-6-(D-ribitylamino)uracil: step 1/2. Catalyzes the formation of 6,7-dimethyl-8-ribityllumazine by condensation of 5-amino-6-(D-ribitylamino)uracil with 3,4-dihydroxy-2-butanone 4-phosphate. This is the penultimate step in the biosynthesis of riboflavin. This Actinobacillus pleuropneumoniae serotype 5b (strain L20) protein is 6,7-dimethyl-8-ribityllumazine synthase.